A 588-amino-acid chain; its full sequence is Calicin (588 aa).

Residues 12–124 (SFVLQNLNRQ…RLRVHCNDFL (113 aa)) form the BTB domain. The BACK domain maps to 133–235 (CLRYLFLAEL…NAVSNKTLVF (103 aa)). Ser149 is modified (phosphoserine). Kelch repeat units lie at residues 280 to 327 (SVVI…SAGR), 328 to 375 (YIYI…TCGG), 377 to 423 (VYSV…TKGD), 425 to 475 (HLYI…SFQQ), 476 to 525 (DNIL…IGDS), and 526 to 580 (KVFV…LAKL).

Interacts with CYLC1; the interaction may be relevant for proper acrosome attachment to the nuclear envelope. Expressed in testis, in spermatozoa (at protein level).

Its subcellular location is the cytoplasm. The protein resides in the cytoskeleton. It localises to the perinuclear theca. It is found in the calyx. In terms of biological role, required for both nuclear and acrosomal shaping during spermiogenesis. The sequence is that of Calicin (CCIN) from Homo sapiens (Human).